The following is a 261-amino-acid chain: Carnitinyl-CoA dehydratase (261 aa).

The active-site Nucleophile is the glutamate 111. Glutamate 131 serves as the catalytic Proton acceptor.

This sequence belongs to the enoyl-CoA hydratase/isomerase family.

It catalyses the reaction (R)-carnitinyl-CoA = crotonobetainyl-CoA + H2O. The protein operates within amine and polyamine metabolism; carnitine metabolism. Functionally, catalyzes the reversible dehydration of L-carnitinyl-CoA to crotonobetainyl-CoA. The sequence is that of Carnitinyl-CoA dehydratase from Proteus mirabilis (strain HI4320).